Here is a 270-residue protein sequence, read N- to C-terminus: 3-methyl-2-oxobutanoate hydroxymethyltransferase (270 aa).

Positions 43 and 82 each coordinate Mg(2+). 3-methyl-2-oxobutanoate-binding positions include Asp-43–Ser-44, Asp-82, and Lys-112. Residue Glu-114 coordinates Mg(2+). Glu-179 serves as the catalytic Proton acceptor.

Belongs to the PanB family. Homodecamer; pentamer of dimers. Mg(2+) serves as cofactor.

Its subcellular location is the cytoplasm. It catalyses the reaction 3-methyl-2-oxobutanoate + (6R)-5,10-methylene-5,6,7,8-tetrahydrofolate + H2O = 2-dehydropantoate + (6S)-5,6,7,8-tetrahydrofolate. The protein operates within cofactor biosynthesis; (R)-pantothenate biosynthesis; (R)-pantoate from 3-methyl-2-oxobutanoate: step 1/2. In terms of biological role, catalyzes the reversible reaction in which hydroxymethyl group from 5,10-methylenetetrahydrofolate is transferred onto alpha-ketoisovalerate to form ketopantoate. The polypeptide is 3-methyl-2-oxobutanoate hydroxymethyltransferase (Staphylococcus saprophyticus subsp. saprophyticus (strain ATCC 15305 / DSM 20229 / NCIMB 8711 / NCTC 7292 / S-41)).